The sequence spans 553 residues: Mannuronan C5-epimerase AlgE4 (553 aa).

8 PbH1 repeats span residues 133–155 (DRDV…DPHE), 157–179 (TINL…VADY), 180–202 (LVDS…NVVT), 204–226 (THDF…VVQR), 234–256 (PSNI…LLKM), 257–279 (TSDI…RVYG), 280–301 (AQDV…AVPE), and 320–342 (TLNT…GIQE). The disordered stretch occupies residues 367–427 (YGPHSTVSGE…DILDGGAGRD (61 aa)). Hemolysin-type calcium-binding repeat units follow at residues 403-420 (QGGS…DDIL) and 421-438 (DGGA…ADTF).

This sequence belongs to the D-mannuronate C5-epimerase family. Ca(2+) is required as a cofactor.

It localises to the secreted. It catalyses the reaction [(1-&gt;4)-beta-D-mannuronosyl](n) = [alginate](n). Its pathway is glycan biosynthesis; alginate biosynthesis. With respect to regulation, inhibited by zinc. Converts beta-D-mannuronic acid (M) to alpha-L-guluronic acid (G), but introduces almost exclusively MG blocks, producing a polymer with non-gel-forming capacity. This chain is Mannuronan C5-epimerase AlgE4, found in Azotobacter vinelandii.